The following is a 130-amino-acid chain: Small ribosomal subunit protein uS11 (130 aa).

The protein belongs to the universal ribosomal protein uS11 family. In terms of assembly, part of the 30S ribosomal subunit. Interacts with proteins S7 and S18. Binds to IF-3.

Located on the platform of the 30S subunit, it bridges several disparate RNA helices of the 16S rRNA. Forms part of the Shine-Dalgarno cleft in the 70S ribosome. In Xanthomonas campestris pv. campestris (strain B100), this protein is Small ribosomal subunit protein uS11.